Reading from the N-terminus, the 562-residue chain is NAD-dependent histone deacetylase SIR2 (562 aa).

The interval 1–67 (MTIPHMKYAV…RETNTTDPLG (67 aa)) is disordered. Polar residues predominate over residues 11–25 (SKTSENKVSNTVSPT). Residues 26–36 (QDKDAIRKQPD) show a composition bias toward basic and acidic residues. The region spanning 237–527 (RLSNFFTIDH…AMVAQKCGWT (291 aa)) is the Deacetylase sirtuin-type domain. NAD(+) contacts are provided by residues 262-281 (GAGV…EGFY) and 344-347 (QNID). Catalysis depends on His364, which acts as the Proton acceptor. The Zn(2+) site is built by Cys372, Cys375, Cys396, and Cys399. Residues 471–473 (GTS), 496–498 (NRD), and Cys513 contribute to the NAD(+) site.

It belongs to the sirtuin family. Class I subfamily. In terms of assembly, homomultimer. Forms a complex with SIR3 and SIR4. Component of the RENT complex, at least composed of SIR2, CDC14 and NET1. The RENT complex interacts with FOB1. Interacts with ESC8. Interacts with and ZDS2. Interacts with MCM10. Interacts with SLX5. Interacts with NSI1. The cofactor is Zn(2+).

The protein localises to the nucleus. It is found in the nucleolus. The catalysed reaction is N(6)-acetyl-L-lysyl-[protein] + NAD(+) + H2O = 2''-O-acetyl-ADP-D-ribose + nicotinamide + L-lysyl-[protein]. Its activity is regulated as follows. Its activity is increased by calorie restriction, which slows the pace of aging and increases maximum lifespan. Activated by resveratrol (3,5,4'-trihydroxy-trans-stilbene), which is found in red wine. NAD-dependent deacetylase, which participates in a wide range of cellular events including chromosome silencing, chromosome segregation, DNA recombination and the determination of life span. Involved in transcriptional repression of the silent mating-type loci HML and HMR and telomeric silencing via its association with SIR3 and SIR4. Plays a central role in ribosomal DNA (rDNA) silencing via its association with the RENT complex, preventing hyperrecombination, and repressing transcription from foreign promoters, which contributes to extending life span. Probably represses transcription via the formation of heterochromatin structure, which involves the compaction of chromatin fiber into a more condensed form, although this complex in at least one case can still bind euchromatic levels of positive transcription regulators. Although it displays some NAD-dependent histone deacetylase activity on histone H3K9Ac and H3K14Ac and histone H4K16Ac in vitro, such activity is unclear in vivo and may not be essential. This is NAD-dependent histone deacetylase SIR2 (SIR2) from Saccharomyces cerevisiae (strain ATCC 204508 / S288c) (Baker's yeast).